We begin with the raw amino-acid sequence, 784 residues long: LPS-assembly protein LptD (784 aa).

A signal peptide spans 1-24 (MKKRIPTLLATMIATALYSQQGLA). 2 disulfides stabilise this stretch: Cys31/Cys724 and Cys173/Cys725.

It belongs to the LptD family. In terms of assembly, component of the lipopolysaccharide transport and assembly complex. Interacts with LptE and LptA. In terms of processing, contains two intramolecular disulfide bonds.

The protein localises to the cell outer membrane. Its function is as follows. Together with LptE, is involved in the assembly of lipopolysaccharide (LPS) at the surface of the outer membrane. The chain is LPS-assembly protein LptD from Escherichia coli O6:K15:H31 (strain 536 / UPEC).